A 217-amino-acid chain; its full sequence is ATP synthase subunit a (217 aa).

6 helical membrane passes run 5-25 (EHVI…LAAG), 63-83 (LIAS…LPFV), 89-109 (NINT…FEGF), 120-140 (FMGP…MSHL), 157-177 (GAIL…TLAV), and 191-213 (LAIV…GAVV).

Belongs to the ATPase A chain family. F-type ATPases have 2 components, CF(1) - the catalytic core - and CF(0) - the membrane proton channel. CF(1) has five subunits: alpha(3), beta(3), gamma(1), delta(1), epsilon(1). CF(0) has three main subunits: a(1), b(2) and c(9-12). The alpha and beta chains form an alternating ring which encloses part of the gamma chain. CF(1) is attached to CF(0) by a central stalk formed by the gamma and epsilon chains, while a peripheral stalk is formed by the delta and b chains.

It localises to the cell inner membrane. In terms of biological role, key component of the proton channel; it plays a direct role in the translocation of protons across the membrane. The chain is ATP synthase subunit a from Hydrogenobaculum sp. (strain Y04AAS1).